A 325-amino-acid polypeptide reads, in one-letter code: Beta-ketoacyl-[acyl-carrier-protein] synthase III (325 aa).

Residues C119 and H252 contribute to the active site. The tract at residues 253-257 (QANIR) is ACP-binding. The active site involves N282.

It belongs to the thiolase-like superfamily. FabH family. In terms of assembly, homodimer.

Its subcellular location is the cytoplasm. It carries out the reaction malonyl-[ACP] + acetyl-CoA + H(+) = 3-oxobutanoyl-[ACP] + CO2 + CoA. It functions in the pathway lipid metabolism; fatty acid biosynthesis. Catalyzes the condensation reaction of fatty acid synthesis by the addition to an acyl acceptor of two carbons from malonyl-ACP. Catalyzes the first condensation reaction which initiates fatty acid synthesis and may therefore play a role in governing the total rate of fatty acid production. Possesses both acetoacetyl-ACP synthase and acetyl transacylase activities. Its substrate specificity determines the biosynthesis of branched-chain and/or straight-chain of fatty acids. This Acidovorax ebreus (strain TPSY) (Diaphorobacter sp. (strain TPSY)) protein is Beta-ketoacyl-[acyl-carrier-protein] synthase III.